A 429-amino-acid chain; its full sequence is S-adenosylmethionine synthase (429 aa).

Residue E9 participates in Mg(2+) binding. Residue H15 participates in ATP binding. E43 contacts K(+). Positions 56 and 99 each coordinate L-methionine. ATP-binding positions include 167 to 169 (DGK), 235 to 238 (SGRF), D246, 252 to 253 (RK), A269, K273, and K277. L-methionine is bound at residue D246. Residue K277 coordinates L-methionine.

The protein belongs to the AdoMet synthase family. As to quaternary structure, homotetramer. The cofactor is Mn(2+). It depends on Mg(2+) as a cofactor. Requires Co(2+) as cofactor. K(+) is required as a cofactor.

It localises to the cytoplasm. It catalyses the reaction L-methionine + ATP + H2O = S-adenosyl-L-methionine + phosphate + diphosphate. Its pathway is amino-acid biosynthesis; S-adenosyl-L-methionine biosynthesis; S-adenosyl-L-methionine from L-methionine: step 1/1. In terms of biological role, catalyzes the formation of S-adenosylmethionine from methionine and ATP. The reaction comprises two steps that are both catalyzed by the same enzyme: formation of S-adenosylmethionine (AdoMet) and triphosphate, and subsequent hydrolysis of the triphosphate. This chain is S-adenosylmethionine synthase (SAMS), found in Carica papaya (Papaya).